A 253-amino-acid polypeptide reads, in one-letter code: Imidazole glycerol phosphate synthase subunit HisF (253 aa).

Catalysis depends on residues aspartate 11 and aspartate 130.

The protein belongs to the HisA/HisF family. As to quaternary structure, heterodimer of HisH and HisF.

The protein resides in the cytoplasm. It catalyses the reaction 5-[(5-phospho-1-deoxy-D-ribulos-1-ylimino)methylamino]-1-(5-phospho-beta-D-ribosyl)imidazole-4-carboxamide + L-glutamine = D-erythro-1-(imidazol-4-yl)glycerol 3-phosphate + 5-amino-1-(5-phospho-beta-D-ribosyl)imidazole-4-carboxamide + L-glutamate + H(+). It participates in amino-acid biosynthesis; L-histidine biosynthesis; L-histidine from 5-phospho-alpha-D-ribose 1-diphosphate: step 5/9. Its function is as follows. IGPS catalyzes the conversion of PRFAR and glutamine to IGP, AICAR and glutamate. The HisF subunit catalyzes the cyclization activity that produces IGP and AICAR from PRFAR using the ammonia provided by the HisH subunit. This chain is Imidazole glycerol phosphate synthase subunit HisF, found in Geobacter sulfurreducens (strain ATCC 51573 / DSM 12127 / PCA).